The chain runs to 435 residues: Adenylosuccinate lyase (435 aa).

N(6)-(1,2-dicarboxyethyl)-AMP-binding positions include 4–5 (RY), 73–75 (RHD), and 99–100 (TS). His-147 functions as the Proton donor/acceptor in the catalytic mechanism. A N(6)-(1,2-dicarboxyethyl)-AMP-binding site is contributed by Gln-218. Ser-268 acts as the Proton donor/acceptor in catalysis. Residues Ser-269, 274–276 (KKN), Asn-282, and 313–317 (SAERV) contribute to the N(6)-(1,2-dicarboxyethyl)-AMP site.

It belongs to the lyase 1 family. Adenylosuccinate lyase subfamily. As to quaternary structure, homotetramer. Residues from neighboring subunits contribute catalytic and substrate-binding residues to each active site.

The catalysed reaction is N(6)-(1,2-dicarboxyethyl)-AMP = fumarate + AMP. The enzyme catalyses (2S)-2-[5-amino-1-(5-phospho-beta-D-ribosyl)imidazole-4-carboxamido]succinate = 5-amino-1-(5-phospho-beta-D-ribosyl)imidazole-4-carboxamide + fumarate. Its pathway is purine metabolism; AMP biosynthesis via de novo pathway; AMP from IMP: step 2/2. It functions in the pathway purine metabolism; IMP biosynthesis via de novo pathway; 5-amino-1-(5-phospho-D-ribosyl)imidazole-4-carboxamide from 5-amino-1-(5-phospho-D-ribosyl)imidazole-4-carboxylate: step 2/2. Catalyzes two reactions in de novo purine nucleotide biosynthesis. Catalyzes the breakdown of 5-aminoimidazole- (N-succinylocarboxamide) ribotide (SAICAR or 2-[5-amino-1-(5-phospho-beta-D-ribosyl)imidazole-4-carboxamido]succinate) to 5-aminoimidazole-4-carboxamide ribotide (AICAR or 5-amino-1-(5-phospho-beta-D-ribosyl)imidazole-4-carboxamide) and fumarate, and of adenylosuccinate (ADS or N(6)-(1,2-dicarboxyethyl)-AMP) to adenosine monophosphate (AMP) and fumarate. The chain is Adenylosuccinate lyase (purB) from Deinococcus radiodurans (strain ATCC 13939 / DSM 20539 / JCM 16871 / CCUG 27074 / LMG 4051 / NBRC 15346 / NCIMB 9279 / VKM B-1422 / R1).